Consider the following 332-residue polypeptide: 2,3-diketo-L-gulonate reductase (332 aa).

Histidine 44 (proton donor) is an active-site residue. NAD(+) contacts are provided by residues 168 to 174 (ITMVDMS), 224 to 225 (WK), and 304 to 306 (GHE).

The protein belongs to the LDH2/MDH2 oxidoreductase family. DlgD subfamily. In terms of assembly, homodimer.

It localises to the cytoplasm. It carries out the reaction 3-dehydro-L-gulonate + NAD(+) = 2,3-dioxo-L-gulonate + NADH + H(+). The catalysed reaction is 3-dehydro-L-gulonate + NADP(+) = 2,3-dioxo-L-gulonate + NADPH + H(+). Catalyzes the reduction of 2,3-diketo-L-gulonate in the presence of NADH, to form 3-keto-L-gulonate. This chain is 2,3-diketo-L-gulonate reductase, found in Escherichia coli O8 (strain IAI1).